The chain runs to 337 residues: Methionyl-tRNA formyltransferase (337 aa).

Position 116–119 (116–119 (SILP)) interacts with (6S)-5,6,7,8-tetrahydrofolate.

This sequence belongs to the Fmt family.

The enzyme catalyses L-methionyl-tRNA(fMet) + (6R)-10-formyltetrahydrofolate = N-formyl-L-methionyl-tRNA(fMet) + (6S)-5,6,7,8-tetrahydrofolate + H(+). Attaches a formyl group to the free amino group of methionyl-tRNA(fMet). The formyl group appears to play a dual role in the initiator identity of N-formylmethionyl-tRNA by promoting its recognition by IF2 and preventing the misappropriation of this tRNA by the elongation apparatus. The chain is Methionyl-tRNA formyltransferase from Desulfovibrio desulfuricans (strain ATCC 27774 / DSM 6949 / MB).